A 124-amino-acid chain; its full sequence is Small ribosomal subunit protein uS12 (124 aa).

The segment at 1-24 (MTTINQLVRKPRQATTYKSASPAL) is disordered. Aspartate 89 carries the 3-methylthioaspartic acid modification.

It belongs to the universal ribosomal protein uS12 family. In terms of assembly, part of the 30S ribosomal subunit. Contacts proteins S8 and S17. May interact with IF1 in the 30S initiation complex.

In terms of biological role, with S4 and S5 plays an important role in translational accuracy. Its function is as follows. Interacts with and stabilizes bases of the 16S rRNA that are involved in tRNA selection in the A site and with the mRNA backbone. Located at the interface of the 30S and 50S subunits, it traverses the body of the 30S subunit contacting proteins on the other side and probably holding the rRNA structure together. The combined cluster of proteins S8, S12 and S17 appears to hold together the shoulder and platform of the 30S subunit. The chain is Small ribosomal subunit protein uS12 from Xanthomonas axonopodis pv. citri (strain 306).